Reading from the N-terminus, the 315-residue chain is Ester hydrolase C11orf54 (315 aa).

The Zn(2+) site is built by His266, His268, and His278.

Monomer. The cofactor is Zn(2+).

The protein resides in the nucleus. The protein localises to the cytoplasm. Exhibits ester hydrolase activity on the substrate p-nitrophenyl acetate, in vitro. Regulates DNA damage and repair by regulating HIF1A degradation via chaperone-mediated autophagy (CMA). Its function is as follows. Probably non-functional. This Homo sapiens (Human) protein is Ester hydrolase C11orf54 (C11orf54).